Here is a 134-residue protein sequence, read N- to C-terminus: Small ribosomal subunit protein uS12 (134 aa).

The interval 1–27 is disordered; the sequence is MPTIQQLVRKGRESFADKSKSPALNSC. Over residues 10 to 20 the composition is skewed to basic and acidic residues; it reads KGRESFADKSK. Asp89 carries the 3-methylthioaspartic acid modification. Residues 103-134 form a disordered region; sequence DTAGVNGRTQRRSKYGAKRPKPGQAPAAKGKK. The span at 111-123 shows a compositional bias: basic residues; the sequence is TQRRSKYGAKRPK. Residues 124-134 are compositionally biased toward low complexity; sequence PGQAPAAKGKK.

Belongs to the universal ribosomal protein uS12 family. In terms of assembly, part of the 30S ribosomal subunit. Contacts proteins S8 and S17. May interact with IF1 in the 30S initiation complex.

Its function is as follows. With S4 and S5 plays an important role in translational accuracy. Interacts with and stabilizes bases of the 16S rRNA that are involved in tRNA selection in the A site and with the mRNA backbone. Located at the interface of the 30S and 50S subunits, it traverses the body of the 30S subunit contacting proteins on the other side and probably holding the rRNA structure together. The combined cluster of proteins S8, S12 and S17 appears to hold together the shoulder and platform of the 30S subunit. This chain is Small ribosomal subunit protein uS12, found in Porphyromonas gingivalis (strain ATCC 33277 / DSM 20709 / CIP 103683 / JCM 12257 / NCTC 11834 / 2561).